A 355-amino-acid chain; its full sequence is Phosphoserine aminotransferase (355 aa).

Residue arginine 41 coordinates L-glutamate. Pyridoxal 5'-phosphate-binding positions include 75 to 76 (AS), tryptophan 99, threonine 147, aspartate 166, and glutamine 189. N6-(pyridoxal phosphate)lysine is present on lysine 190. 231-232 (NT) contacts pyridoxal 5'-phosphate.

Belongs to the class-V pyridoxal-phosphate-dependent aminotransferase family. SerC subfamily. As to quaternary structure, homodimer. Pyridoxal 5'-phosphate is required as a cofactor.

The protein resides in the cytoplasm. It carries out the reaction O-phospho-L-serine + 2-oxoglutarate = 3-phosphooxypyruvate + L-glutamate. The enzyme catalyses 4-(phosphooxy)-L-threonine + 2-oxoglutarate = (R)-3-hydroxy-2-oxo-4-phosphooxybutanoate + L-glutamate. Its pathway is amino-acid biosynthesis; L-serine biosynthesis; L-serine from 3-phospho-D-glycerate: step 2/3. It functions in the pathway cofactor biosynthesis; pyridoxine 5'-phosphate biosynthesis; pyridoxine 5'-phosphate from D-erythrose 4-phosphate: step 3/5. Its function is as follows. Catalyzes the reversible conversion of 3-phosphohydroxypyruvate to phosphoserine and of 3-hydroxy-2-oxo-4-phosphonooxybutanoate to phosphohydroxythreonine. The protein is Phosphoserine aminotransferase of Bacteroides fragilis (strain ATCC 25285 / DSM 2151 / CCUG 4856 / JCM 11019 / LMG 10263 / NCTC 9343 / Onslow / VPI 2553 / EN-2).